The following is a 447-amino-acid chain: Tetratricopeptide repeat protein 23 (447 aa).

TPR repeat units follow at residues 45 to 78, 137 to 170, 186 to 219, and 356 to 389; these read LHLCEEKAKSYSNSHEYKQAVHELVRCVALTRIC, IELFHTMGRALLSLQKFKEAAENLTKAERLSKEL, ARIRLSFAQVYQGQKKSKEALSHYQAALEYVEIS, and AETYRLLGGADLAQGNHSGARKKLKKCLQIQTLL.

In terms of assembly, found Associated with the EvC complex composed of EFCAB7, IQCE, EVC2 and EVC.

It localises to the cell projection. The protein resides in the cilium. Functionally, participates positively in the ciliary Hedgehog (Hh) signaling. This chain is Tetratricopeptide repeat protein 23 (TTC23), found in Homo sapiens (Human).